Consider the following 246-residue polypeptide: Probable transcriptional regulatory protein WRi_002620 (246 aa).

The interval 1-22 is disordered; sequence MAGHSQFSNIKHRKGAQDAKRS.

Belongs to the TACO1 family.

It is found in the cytoplasm. The sequence is that of Probable transcriptional regulatory protein WRi_002620 from Wolbachia sp. subsp. Drosophila simulans (strain wRi).